Reading from the N-terminus, the 122-residue chain is Large ribosomal subunit protein bL12 (122 aa).

This sequence belongs to the bacterial ribosomal protein bL12 family. As to quaternary structure, homodimer. Part of the ribosomal stalk of the 50S ribosomal subunit. Forms a multimeric L10(L12)X complex, where L10 forms an elongated spine to which 2 to 4 L12 dimers bind in a sequential fashion. Binds GTP-bound translation factors.

In terms of biological role, forms part of the ribosomal stalk which helps the ribosome interact with GTP-bound translation factors. Is thus essential for accurate translation. This is Large ribosomal subunit protein bL12 from Yersinia enterocolitica serotype O:8 / biotype 1B (strain NCTC 13174 / 8081).